Reading from the N-terminus, the 414-residue chain is 2,3-diketo-5-methylthiopentyl-1-phosphate enolase (414 aa).

The active-site Proton acceptor is lysine 99. Substrate-binding positions include lysine 148, 174 to 177, histidine 265, glycine 338, and 360 to 361; these read KDDE and GG. Mg(2+) contacts are provided by lysine 174, aspartate 176, and glutamate 177. At lysine 174 the chain carries N6-carboxylysine.

This sequence belongs to the RuBisCO large chain family. Type IV subfamily. Homodimer. Requires Mg(2+) as cofactor.

The catalysed reaction is 5-methylsulfanyl-2,3-dioxopentyl phosphate = 2-hydroxy-5-methylsulfanyl-3-oxopent-1-enyl phosphate. The protein operates within amino-acid biosynthesis; L-methionine biosynthesis via salvage pathway; L-methionine from S-methyl-5-thio-alpha-D-ribose 1-phosphate: step 3/6. Its function is as follows. Catalyzes the enolization of 2,3-diketo-5-methylthiopentyl-1-phosphate (DK-MTP-1-P) into 2-hydroxy-3-keto-5-methylthiopentenyl-1-phosphate (HK-MTPenyl-1-P). The polypeptide is 2,3-diketo-5-methylthiopentyl-1-phosphate enolase (Bacillus cereus (strain AH820)).